Reading from the N-terminus, the 238-residue chain is tRNA (guanine-N(7)-)-methyltransferase (238 aa).

The S-adenosyl-L-methionine site is built by Glu68, Glu93, Asp120, and Asp143. Residue Asp143 is part of the active site. Residues Lys147, Asp179, and 216-219 (TKFE) contribute to the substrate site.

Belongs to the class I-like SAM-binding methyltransferase superfamily. TrmB family.

It catalyses the reaction guanosine(46) in tRNA + S-adenosyl-L-methionine = N(7)-methylguanosine(46) in tRNA + S-adenosyl-L-homocysteine. It functions in the pathway tRNA modification; N(7)-methylguanine-tRNA biosynthesis. In terms of biological role, catalyzes the formation of N(7)-methylguanine at position 46 (m7G46) in tRNA. This is tRNA (guanine-N(7)-)-methyltransferase from Shewanella oneidensis (strain ATCC 700550 / JCM 31522 / CIP 106686 / LMG 19005 / NCIMB 14063 / MR-1).